A 298-amino-acid polypeptide reads, in one-letter code: Probable phosphoserine phosphatase (298 aa).

D82 serves as the catalytic Nucleophile. 2 residues coordinate Mg(2+): D82 and D84. The active-site Proton donor is D84. Substrate-binding positions include E91, R127, 170–171, and K217; that span reads SG. A Mg(2+)-binding site is contributed by D240. Position 243 (N243) interacts with substrate.

Belongs to the HAD-like hydrolase superfamily. SerB family. Mg(2+) serves as cofactor.

It catalyses the reaction O-phospho-L-serine + H2O = L-serine + phosphate. The catalysed reaction is O-phospho-D-serine + H2O = D-serine + phosphate. It participates in amino-acid biosynthesis; L-serine biosynthesis; L-serine from 3-phospho-D-glycerate: step 3/3. The protein is Probable phosphoserine phosphatase of Schizosaccharomyces pombe (strain 972 / ATCC 24843) (Fission yeast).